Reading from the N-terminus, the 529-residue chain is Low affinity inorganic phosphate transporter 4 (529 aa).

The Cytoplasmic portion of the chain corresponds to 1-21 (MASDNLVVLNALDTARTQWYH). The helical transmembrane segment at 22–42 (VTAVIIAGMGFFTDAYDLFCI) threads the bilayer. Topologically, residues 43-71 (STVSKLLGRLYYYDPSTKAPGKLPHMANN) are extracellular. The helical transmembrane segment at 72 to 92 (WVIGVALVGTLSGQLVFGWLG) threads the bilayer. Over 93–99 (DKLGRKK) the chain is Cytoplasmic. Residues 100-120 (VYGLTLILMVICALCSGLSLG) form a helical membrane-spanning segment. Topologically, residues 121–125 (YSPKS) are extracellular. A helical transmembrane segment spans residues 126 to 146 (VIGTLCFFRFWLGFGIGGDYP). Over 147–161 (LSATIMSEYANKSTR) the chain is Cytoplasmic. A helical membrane pass occupies residues 162-182 (GAFIAAVFAMQGVGIIFAGLV). Topologically, residues 183–211 (SMTISKVFLMNFEGKPFNVDEVLSTEPEA) are extracellular. A helical membrane pass occupies residues 212 to 232 (DYVWRIVLMLGALPALLTYYW). At 233 to 291 (RMKMPETGRYTAIIEGNAKQAAIDMGKVLDIEIQAEGDKLAQFKAANEYSLLSNEFFQR) the chain is on the cytoplasmic side. The helical transmembrane segment at 292–312 (HGLHLIGTMSTWFLLDIAFYS) threads the bilayer. The Extracellular portion of the chain corresponds to 313–344 (QNLTQKDIFPVMGLTSKANTISALREMFETSR). A glycan (N-linked (GlcNAc...) asparagine) is linked at Asn314. Residues 345–365 (AMFVIALFGTFPGYWFTVFFI) form a helical membrane-spanning segment. The Cytoplasmic segment spans residues 366–374 (EKIGRFKIQ). A helical transmembrane segment spans residues 375 to 395 (LVGFFMMSVFMAIIGVKYDYL). Residues 396 to 405 (RNKEHKWTFA) lie on the Extracellular side of the membrane. A helical membrane pass occupies residues 406–426 (ALYGLTFFFANFGPNSTTFVL). Residues 427-437 (PAELFPTRVRS) lie on the Cytoplasmic side of the membrane. A helical transmembrane segment spans residues 438–458 (TCHALSAALGKAGAMISAFGI). Residues 459-471 (QQYTQDQDVRKIK) lie on the Extracellular side of the membrane. Residues 472-492 (TAMLLLAFTNMVGFCCTFLVT) traverse the membrane as a helical segment. The Cytoplasmic portion of the chain corresponds to 493 to 529 (ETKGRSLEEISGEDGRQNETQMKTTRPVSGHPDDGWE). The disordered stretch occupies residues 501–529 (EISGEDGRQNETQMKTTRPVSGHPDDGWE). A compositionally biased stretch (polar residues) spans 510-519 (NETQMKTTRP).

It belongs to the major facilitator superfamily. Phosphate:H(+) symporter (TC 2.A.1.9) family.

It localises to the cell membrane. It catalyses the reaction phosphate(in) + H(+)(in) = phosphate(out) + H(+)(out). Low-affinity transporter for external inorganic phosphate (Pi) probably involved in the acquisition of phosphate released by arbuscular mycorrhizal (AM) fungi (e.g. Rhizophagus irregularis and Glomus intraradices) during AM symbiosis. Acts as a Pi-sensing machinery at the root tip level, independently of AM fungi, involved in the regulation of early root branching and lateral roots formation. The sequence is that of Low affinity inorganic phosphate transporter 4 from Petunia hybrida (Petunia).